Reading from the N-terminus, the 242-residue chain is MMMDLFETGSYFFYLDGENGALQQLEMAEGSPLYPGSDGTLSPCQDQLPPEAGSDSSGEEHVLAPPGLQPPHCPGQCLIWACKTCKRKSAPTDRRKAATLRERRRLKKINEAFEALKRRTVANPNQRLPKVEILRSAISYIERLQDLLHRLDQQDKMQEVAADPFSFSPKQGNVPGSDFLSTCGSDWHSASDHSRALGGSPKAGGSMVESSASSSLRCLSSIVDSISSDEPKLPGAEEAVEK.

Residues 30 to 63 (GSPLYPGSDGTLSPCQDQLPPEAGSDSSGEEHVL) are disordered. One can recognise a bHLH domain in the interval 93 to 144 (DRRKAATLRERRRLKKINEAFEALKRRTVANPNQRLPKVEILRSAISYIERL). Positions 190–210 (ASDHSRALGGSPKAGGSMVES) are disordered.

As to quaternary structure, efficient DNA binding requires dimerization with another bHLH protein. In terms of tissue distribution, skeletal muscle.

The protein resides in the nucleus. Its function is as follows. Involved in muscle differentiation (myogenic factor). Induces fibroblasts to differentiate into myoblasts. Probable sequence specific DNA-binding protein. In Gallus gallus (Chicken), this protein is Myogenic factor 6 (MYF6).